Consider the following 255-residue polypeptide: MLLALGPKAWPKLSQFKPLLRISGGETLHRNSRHWAGQGQRQGPGLRTRLLITALFGAGLGWAWLAARAEKEQWRQQQRTEALRQAAVGQGDFSLLDHKGQPRCKADFRGQWVLMYFGFTHCPDICPDELEKLVQVVRKLEAEPDLPLVQPVFITVDPERDDVAAMARYVQEFHPRLLGLTGSTEQVAHASRNYRVYYSAGPKDEDQDYIVDHSIAIYLLNPDGLFTDYYGRSRSAEQIVESIRRHIAAFHSVLP.

Residues 1 to 41 (MLLALGPKAWPKLSQFKPLLRISGGETLHRNSRHWAGQGQR) constitute a mitochondrion transit peptide. Residues 42–49 (QGPGLRTR) are Mitochondrial matrix-facing. Residues 50–67 (LLITALFGAGLGWAWLAA) form a helical membrane-spanning segment. The Mitochondrial intermembrane segment spans residues 68 to 255 (RAEKEQWRQQ…HIAAFHSVLP (188 aa)). A Thioredoxin domain is found at 74 to 248 (WRQQQRTEAL…IVESIRRHIA (175 aa)). Cys122, Cys126, and His213 together coordinate Cu cation. The cysteines at positions 122 and 126 are disulfide-linked.

The protein belongs to the SCO1/2 family. In terms of assembly, homodimer. Interacts with COA6. Found in a complex with TMEM177, COX20, COA6, MT-CO2/COX2, COX18 and SCO1. Interacts with TMEM177 in a COX20-dependent manner. Interacts with COX20 in a MT-CO2/COX2- and COX18-dependent manner. Interacts with COX16. In terms of tissue distribution, expressed in retina, retinal pigment epithelium, and sclera.

The protein resides in the mitochondrion inner membrane. Copper metallochaperone essential for the synthesis and maturation of cytochrome c oxidase subunit II (MT-CO2/COX2) by facilitating the incorporation of copper into the Cu(A) site of MT-CO2/COX2. Could also act as a thiol-disulfide oxidoreductase to regulate the redox state of the cysteines in SCO1 during maturation of MT-CO2/COX2. This Mus musculus (Mouse) protein is Protein SCO2 homolog, mitochondrial (Sco2).